We begin with the raw amino-acid sequence, 138 residues long: Small ribosomal subunit protein uS8c (138 aa).

Belongs to the universal ribosomal protein uS8 family. As to quaternary structure, part of the 30S ribosomal subunit.

The protein resides in the plastid. Its subcellular location is the chloroplast. In terms of biological role, one of the primary rRNA binding proteins, it binds directly to 16S rRNA central domain where it helps coordinate assembly of the platform of the 30S subunit. In Chlorella vulgaris (Green alga), this protein is Small ribosomal subunit protein uS8c (rps8).